A 161-amino-acid polypeptide reads, in one-letter code: uncharacterized protein (161 aa).

As to quaternary structure, interacts with ribosomes.

This is an uncharacterized protein from Saccharomyces cerevisiae (strain ATCC 204508 / S288c) (Baker's yeast).